A 196-amino-acid polypeptide reads, in one-letter code: Dehydrogenase RED3 (196 aa).

Ser47, Asp74, Asn101, Arg134, Tyr166, and Lys170 together coordinate NADP(+). The active-site Proton acceptor is the Tyr166. The active-site Lowers pKa of active site Tyr is Lys170.

Belongs to the short-chain dehydrogenases/reductases (SDR) family.

The catalysed reaction is a primary alcohol + NAD(+) = an aldehyde + NADH + H(+). The enzyme catalyses a secondary alcohol + NAD(+) = a ketone + NADH + H(+). Its pathway is mycotoxin biosynthesis. In terms of biological role, dehydrogenase; part of the Tox1B locus, one of the 2 loci that mediate the biosynthesis of T-toxin, a family of linear polyketides 37 to 45 carbons in length, of which the major component is 41 carbons, and which leads to high virulence to maize. One of the PKSs (PKS1 or PKS2) could synthesize a precursor, used subsequently by the other PKS as starter unit, to add additional carbons. Variability in the length of the final carbon backbone C35-47 could be achieved by varying the number of condensation cycles, or use of different starter or extender units or might be due to decarboxylation of the penultimate product, catalyzed by DEC1. Additional proteins are required for the biosynthesis of T-toxin, including oxidoreductases RED1, RED2, RED3, LAM1 and OXI1, as well as esterase TOX9. This is Dehydrogenase RED3 from Cochliobolus heterostrophus (strain C4 / ATCC 48331 / race T) (Southern corn leaf blight fungus).